A 728-amino-acid polypeptide reads, in one-letter code: Phosphoribosylformylglycinamidine synthase subunit PurL (728 aa).

Residue His42 is part of the active site. ATP contacts are provided by Tyr45 and Lys84. Glu86 serves as a coordination point for Mg(2+). Residues 87–90 (SHNH) and Arg109 contribute to the substrate site. The Proton acceptor role is filled by His88. Mg(2+) is bound at residue Asp110. Residue Gln237 coordinates substrate. Residue Asp265 coordinates Mg(2+). 309 to 311 (ESQ) contacts substrate. Residues Asp491 and Gly528 each coordinate ATP. Position 529 (Asn529) interacts with Mg(2+). Ser531 contributes to the substrate binding site.

This sequence belongs to the FGAMS family. In terms of assembly, monomer. Part of the FGAM synthase complex composed of 1 PurL, 1 PurQ and 2 PurS subunits.

It localises to the cytoplasm. It catalyses the reaction N(2)-formyl-N(1)-(5-phospho-beta-D-ribosyl)glycinamide + L-glutamine + ATP + H2O = 2-formamido-N(1)-(5-O-phospho-beta-D-ribosyl)acetamidine + L-glutamate + ADP + phosphate + H(+). It participates in purine metabolism; IMP biosynthesis via de novo pathway; 5-amino-1-(5-phospho-D-ribosyl)imidazole from N(2)-formyl-N(1)-(5-phospho-D-ribosyl)glycinamide: step 1/2. In terms of biological role, part of the phosphoribosylformylglycinamidine synthase complex involved in the purines biosynthetic pathway. Catalyzes the ATP-dependent conversion of formylglycinamide ribonucleotide (FGAR) and glutamine to yield formylglycinamidine ribonucleotide (FGAM) and glutamate. The FGAM synthase complex is composed of three subunits. PurQ produces an ammonia molecule by converting glutamine to glutamate. PurL transfers the ammonia molecule to FGAR to form FGAM in an ATP-dependent manner. PurS interacts with PurQ and PurL and is thought to assist in the transfer of the ammonia molecule from PurQ to PurL. This is Phosphoribosylformylglycinamidine synthase subunit PurL from Campylobacter jejuni subsp. doylei (strain ATCC BAA-1458 / RM4099 / 269.97).